Reading from the N-terminus, the 332-residue chain is ATP-dependent 6-phosphofructokinase (332 aa).

Gly11 provides a ligand contact to ATP. 21–25 (RSVVR) is a binding site for ADP. Residues 72–73 (RC) and 102–105 (GDGS) contribute to the ATP site. Asp103 is a Mg(2+) binding site. A substrate-binding site is contributed by 126 to 128 (TID). Asp128 serves as the catalytic Proton acceptor. Residue Arg155 participates in ADP binding. Residues Arg163 and 170-172 (MGR) each bind substrate. ADP contacts are provided by residues 186–188 (GAE), Arg212, and 214–216 (KLH). Substrate is bound by residues Glu223, Arg256, and 262–265 (HIQR).

The protein belongs to the phosphofructokinase type A (PFKA) family. ATP-dependent PFK group I subfamily. Prokaryotic clade 'B1' sub-subfamily. Homotetramer. The cofactor is Mg(2+).

The protein resides in the cytoplasm. It catalyses the reaction beta-D-fructose 6-phosphate + ATP = beta-D-fructose 1,6-bisphosphate + ADP + H(+). It functions in the pathway carbohydrate degradation; glycolysis; D-glyceraldehyde 3-phosphate and glycerone phosphate from D-glucose: step 3/4. With respect to regulation, allosterically activated by ADP and other diphosphonucleosides, and allosterically inhibited by phosphoenolpyruvate. Catalyzes the phosphorylation of D-fructose 6-phosphate to fructose 1,6-bisphosphate by ATP, the first committing step of glycolysis. This is ATP-dependent 6-phosphofructokinase from Halothermothrix orenii (strain H 168 / OCM 544 / DSM 9562).